The chain runs to 150 residues: MKYQQLENLESGWKWKYLVKKHREGELITRYVEASAAQEAVNLLLALENEPVRVNVWIDRHMNPALLNRMKQTIRARRKRHFNAEHQHTRKKSIDLEFMVWQRLAGLAQRRGKTLSETIVQLIEDAEHKEKYATTMSTLKQDLQALLGKK.

Belongs to the MatP family. In terms of assembly, homodimer.

It is found in the cytoplasm. Required for spatial organization of the terminus region of the chromosome (Ter macrodomain) during the cell cycle. Prevents early segregation of duplicated Ter macrodomains during cell division. Binds specifically to matS, which is a 13 bp signature motif repeated within the Ter macrodomain. This is Macrodomain Ter protein from Salmonella arizonae (strain ATCC BAA-731 / CDC346-86 / RSK2980).